We begin with the raw amino-acid sequence, 141 residues long: Large-conductance mechanosensitive channel (141 aa).

Helical transmembrane passes span 14 to 34, 38 to 58, and 82 to 102; these read VVDL…VNSL, VIMP…YYIP, and GQFL…FMVI.

Belongs to the MscL family. In terms of assembly, homopentamer.

The protein resides in the cell inner membrane. In terms of biological role, channel that opens in response to stretch forces in the membrane lipid bilayer. May participate in the regulation of osmotic pressure changes within the cell. The chain is Large-conductance mechanosensitive channel from Methylorubrum extorquens (strain CM4 / NCIMB 13688) (Methylobacterium extorquens).